Reading from the N-terminus, the 375-residue chain is tRNA-specific 2-thiouridylase MnmA (375 aa).

ATP contacts are provided by residues 12 to 19 (GMSGGVDS) and M38. The interaction with target base in tRNA stretch occupies residues 98–100 (NPD). Catalysis depends on C103, which acts as the Nucleophile. A disulfide bridge connects residues C103 and C200. Position 127 (G127) interacts with ATP. The interaction with tRNA stretch occupies residues 150–152 (KDQ). C200 functions as the Cysteine persulfide intermediate in the catalytic mechanism. Residues 312-313 (RY) are interaction with tRNA.

This sequence belongs to the MnmA/TRMU family.

It localises to the cytoplasm. It carries out the reaction S-sulfanyl-L-cysteinyl-[protein] + uridine(34) in tRNA + AH2 + ATP = 2-thiouridine(34) in tRNA + L-cysteinyl-[protein] + A + AMP + diphosphate + H(+). Its function is as follows. Catalyzes the 2-thiolation of uridine at the wobble position (U34) of tRNA, leading to the formation of s(2)U34. This is tRNA-specific 2-thiouridylase MnmA from Lactobacillus gasseri (strain ATCC 33323 / DSM 20243 / BCRC 14619 / CIP 102991 / JCM 1131 / KCTC 3163 / NCIMB 11718 / NCTC 13722 / AM63).